The sequence spans 310 residues: Ornithine carbamoyltransferase (310 aa).

Carbamoyl phosphate contacts are provided by residues 57-60 (STRT), Q84, R108, and 135-138 (HPCQ). L-ornithine-binding positions include N166, D229, and 233-234 (SM). Residues 269–270 (CL) and R297 contribute to the carbamoyl phosphate site.

This sequence belongs to the aspartate/ornithine carbamoyltransferase superfamily. OTCase family.

Its subcellular location is the cytoplasm. It carries out the reaction carbamoyl phosphate + L-ornithine = L-citrulline + phosphate + H(+). The protein operates within amino-acid biosynthesis; L-arginine biosynthesis; L-arginine from L-ornithine and carbamoyl phosphate: step 1/3. In terms of biological role, reversibly catalyzes the transfer of the carbamoyl group from carbamoyl phosphate (CP) to the N(epsilon) atom of ornithine (ORN) to produce L-citrulline. This chain is Ornithine carbamoyltransferase, found in Thermosynechococcus vestitus (strain NIES-2133 / IAM M-273 / BP-1).